Consider the following 59-residue polypeptide: UPF0181 protein YoaH (59 aa).

This sequence belongs to the UPF0181 family.

In Shigella flexneri serotype 5b (strain 8401), this protein is UPF0181 protein YoaH.